Here is a 366-residue protein sequence, read N- to C-terminus: Prostaglandin F2-alpha receptor (366 aa).

At 1-31 (MSINSSKQPASSAAGLIANTTCQTENRLSVF) the chain is on the extracellular side. N4 and N19 each carry an N-linked (GlcNAc...) asparagine glycan. The chain crosses the membrane as a helical span at residues 32–55 (FSIIFMTVGIVSNSLAIAILMKAY). Over 56–69 (QRFRRKSKASFLLL) the chain is Cytoplasmic. A helical transmembrane segment spans residues 70–90 (ASGLVITDFFGHLINGGIAVF). The Extracellular segment spans residues 91–109 (VYASDKDWIRFDQSNILCS). A disulfide bridge links C108 with C186. The helical transmembrane segment at 110-131 (VFGISMVFSGLCPLFLGSTMAI) threads the bilayer. Over 132-152 (ERCIGVTNPLFHSTKITSKHV) the chain is Cytoplasmic. The chain crosses the membrane as a helical span at residues 153–175 (KMILSGVCMFAVFVALLPILGHR). At 176 to 198 (DYQIQASRTWCFYNTEHIEDWED) the chain is on the extracellular side. The chain crosses the membrane as a helical span at residues 199 to 224 (RFYLLFFSSLGLLALGISFSCNAVTG). Residues 225–250 (VTLLRVKFRSQQHRQGRSHHLEMVIQ) lie on the Cytoplasmic side of the membrane. Residues 251-267 (LLAIMCVSCVCWSPFLV) traverse the membrane as a helical segment. Over 268-285 (TMANIAINGNNSPVTCET) the chain is Extracellular. Residues 286–307 (TLFALRMATWNQILDPWVYILL) traverse the membrane as a helical segment. Residues 308 to 366 (RKAVLRNLYKLASRCCGVNIISLHIWELSSIKNSLKVAAISESPAAEKENQQASSEAGL) lie on the Cytoplasmic side of the membrane.

The protein belongs to the G-protein coupled receptor 1 family. Highest expression in pregnant ovary. Also found in a low extent in the kidney. In the brain, expressed in astrocytes and oligodendrocytes, and meningeal fibroblasts, but not in migroglia cells.

The protein localises to the cell membrane. In terms of biological role, receptor for prostaglandin F2-alpha (PGF2-alpha). The activity of this receptor is mediated by G proteins which activate a phosphatidylinositol-calcium second messenger system. Initiates luteolysis in the corpus luteum. In Rattus norvegicus (Rat), this protein is Prostaglandin F2-alpha receptor (Ptgfr).